The primary structure comprises 322 residues: Ribose-phosphate pyrophosphokinase (322 aa).

ATP-binding positions include 43–45 and 102–103; these read DGE and RQ. Mg(2+)-binding residues include His-137 and Asp-177. Residue Lys-201 is part of the active site. Residues Arg-203, Asp-227, and 231-235 each bind D-ribose 5-phosphate; that span reads DTAGT.

This sequence belongs to the ribose-phosphate pyrophosphokinase family. Class I subfamily. As to quaternary structure, homohexamer. The cofactor is Mg(2+).

The protein localises to the cytoplasm. The catalysed reaction is D-ribose 5-phosphate + ATP = 5-phospho-alpha-D-ribose 1-diphosphate + AMP + H(+). It functions in the pathway metabolic intermediate biosynthesis; 5-phospho-alpha-D-ribose 1-diphosphate biosynthesis; 5-phospho-alpha-D-ribose 1-diphosphate from D-ribose 5-phosphate (route I): step 1/1. Its function is as follows. Involved in the biosynthesis of the central metabolite phospho-alpha-D-ribosyl-1-pyrophosphate (PRPP) via the transfer of pyrophosphoryl group from ATP to 1-hydroxyl of ribose-5-phosphate (Rib-5-P). The polypeptide is Ribose-phosphate pyrophosphokinase (Xylella fastidiosa (strain Temecula1 / ATCC 700964)).